Reading from the N-terminus, the 948-residue chain is Valine--tRNA ligase (948 aa).

Positions 40-50 (PNVTGSLHMGH) match the 'HIGH' region motif. The short motif at 551 to 555 (KMSKS) is the 'KMSKS' region element. ATP is bound at residue K554. The stretch at 879 to 947 (LIDKGAELAR…LAEQHARISS (69 aa)) forms a coiled coil.

This sequence belongs to the class-I aminoacyl-tRNA synthetase family. ValS type 1 subfamily. In terms of assembly, monomer.

Its subcellular location is the cytoplasm. The enzyme catalyses tRNA(Val) + L-valine + ATP = L-valyl-tRNA(Val) + AMP + diphosphate. Functionally, catalyzes the attachment of valine to tRNA(Val). As ValRS can inadvertently accommodate and process structurally similar amino acids such as threonine, to avoid such errors, it has a 'posttransfer' editing activity that hydrolyzes mischarged Thr-tRNA(Val) in a tRNA-dependent manner. The sequence is that of Valine--tRNA ligase from Pseudomonas fluorescens (strain ATCC BAA-477 / NRRL B-23932 / Pf-5).